The primary structure comprises 389 residues: MTTLSTATILLPEPLGGTLVNRVRRPGTDFDPAELQGLPRLELSDRSFADLEMLATGAYSPLTGFLGEADYLSVIERMRLADGTPWSIPITLPVSRAEAERYAGCVVLTRGGEAVGTLEVQERFEARQSLEAREVYRTEDTAHPGVAALYAQGDVNLAGPVTLFEVPRGNFPRHHRTPSEVRAVIEARGWRTTVAFQTRNPIHRAHEYLHKVTLELVDGLLLHPLVGQTKGDDVPAATRVKAYEVLLEHYYPKERTLLSVYPAAMRYAGPREAILHALSRRNYGVTHFIVGRDHAGVGQYYGTYDAQEIFSAYTPEELGIRILKFEHTFYCRTCGQLVSPRTCPHGSEHHLVLSGTKVREKLRAGERLPAEFTRPEVAEVLREAYAAQD.

The protein belongs to the sulfate adenylyltransferase family.

The enzyme catalyses sulfate + ATP + H(+) = adenosine 5'-phosphosulfate + diphosphate. It functions in the pathway sulfur metabolism; hydrogen sulfide biosynthesis; sulfite from sulfate: step 1/3. In Deinococcus geothermalis (strain DSM 11300 / CIP 105573 / AG-3a), this protein is Sulfate adenylyltransferase.